The sequence spans 81 residues: Putative membrane protein insertion efficiency factor (81 aa).

The segment at 61–81 (NDGGFDPVPPAPSSRTSSIAE) is disordered.

This sequence belongs to the UPF0161 family.

Its subcellular location is the cell inner membrane. Its function is as follows. Could be involved in insertion of integral membrane proteins into the membrane. The protein is Putative membrane protein insertion efficiency factor of Pseudomonas putida (strain ATCC 700007 / DSM 6899 / JCM 31910 / BCRC 17059 / LMG 24140 / F1).